Consider the following 134-residue polypeptide: Protein NrdI (134 aa).

It belongs to the NrdI family.

Its function is as follows. Probably involved in ribonucleotide reductase function. The polypeptide is Protein NrdI (Serratia proteamaculans (strain 568)).